We begin with the raw amino-acid sequence, 324 residues long: MIRAYEQNPQHFIEDLEKVRVEQLTGHGSSVLEELVQLVKDKNIDISIKYDPRKDSEVFANRVITDDIELLKKILAYFLPEDAILKGGHYDNQLQNGIKRVKEFLESSPNTQWELRAFMAVMHFSLTADRIDDDILKVIVDSMNHHGDARSKLREELAELTAELKIYSVIQAEINKHLSSSGTINIHDKSINLMDKNLYGYTDEEIFKASAEYKILEKMPQTTIQVDGSEKKIVSIKDFLGSENKRTGALGNLKNSYSYNKDNNELSHFATTCSDKSRPLNDLVSQKTTQLSDITSRFNSAIEALNRFIQKYDSVMQRLLDDTR.

It is found in the secreted. Functionally, possibly involved in calcium regulation of YOP expression, which includes the export process. The sequence is that of Virulence-associated V antigen (lcrV) from Yersinia pestis (strain Pestoides F).